Reading from the N-terminus, the 553-residue chain is Protein YloV (553 aa).

A DhaL domain is found at Arg-9–Ala-201.

The sequence is that of Protein YloV (yloV) from Bacillus subtilis (strain 168).